Reading from the N-terminus, the 689-residue chain is DNA topoisomerase 1 (689 aa).

One can recognise a Toprim domain in the interval 3 to 113 (DNLVIVESPA…KENRVVFNEI (111 aa)). Residues glutamate 9 and aspartate 82 each coordinate Mg(2+). One can recognise a Topo IA-type catalytic domain in the interval 129–557 (EMNLVDAQQA…FFSSFKQDVE (429 aa)). The segment at 163–168 (SAGRVQ) is interaction with DNA. Tyrosine 298 acts as the O-(5'-phospho-DNA)-tyrosine intermediate in catalysis. The tract at residues 328–356 (SKRKASGKQGDQDAHEAIRPSSTMRTPDD) is disordered. 3 consecutive C4-type zinc fingers follow at residues 577 to 603 (CEIC…FPDC), 617 to 645 (CPKC…YPEC), and 658 to 681 (CPKC…CSNC).

Belongs to the type IA topoisomerase family. As to quaternary structure, monomer. It depends on Mg(2+) as a cofactor.

The enzyme catalyses ATP-independent breakage of single-stranded DNA, followed by passage and rejoining.. Releases the supercoiling and torsional tension of DNA, which is introduced during the DNA replication and transcription, by transiently cleaving and rejoining one strand of the DNA duplex. Introduces a single-strand break via transesterification at a target site in duplex DNA. The scissile phosphodiester is attacked by the catalytic tyrosine of the enzyme, resulting in the formation of a DNA-(5'-phosphotyrosyl)-enzyme intermediate and the expulsion of a 3'-OH DNA strand. The free DNA strand then undergoes passage around the unbroken strand, thus removing DNA supercoils. Finally, in the religation step, the DNA 3'-OH attacks the covalent intermediate to expel the active-site tyrosine and restore the DNA phosphodiester backbone. The protein is DNA topoisomerase 1 of Staphylococcus aureus (strain USA300).